Consider the following 1710-residue polypeptide: Latrophilin Cirl (1710 aa).

Over 1–767 the chain is Extracellular; that stretch reads MLPTILSISY…LFTMFDGNMR (767 aa). An SUEL-type lectin domain is found at 25-114; that stretch reads ACEGKKLTIE…KYLEAHYQCI (90 aa). The N-linked (GlcNAc...) asparagine glycan is linked to Asn142. Residues 183 to 304 are disordered; that stretch reads QHTAVTHSTP…SGSVVPGNGS (122 aa). 2 stretches are compositionally biased toward polar residues: residues 185 to 198 and 256 to 265; these read TAVT…STTA and NATSPSNTRI. Asn256 carries an N-linked (GlcNAc...) asparagine glycan. Low complexity-rich tracts occupy residues 275–285 and 295–304; these read DDGTLLTTKSS and SGSVVPGNGS. Asn302 and Asn341 each carry an N-linked (GlcNAc...) asparagine glycan. The segment at 376–400 is disordered; that stretch reads YDEYDDDPSSTTPATSSADCLHNSS. A compositionally biased stretch (low complexity) spans 384 to 394; sequence SSTTPATSSAD. N-linked (GlcNAc...) asparagine glycans are attached at residues Asn398, Asn655, Asn703, and Asn730. In terms of domain architecture, GAIN-B spans 561 to 754; the sequence is RSVVQKVKNI…AILMDVVDEH (194 aa). 2 disulfide bridges follow: Cys709–Cys736 and Cys724–Cys738. The tract at residues 709-754 is GPS; sequence CVFWNYIDHAWSANGCSLESTNRTHSVCSCNHLTNFAILMDVVDEH. Residues 768–788 form a helical membrane-spanning segment; that stretch reads IFIYISIGICVVFIVIALLTL. The Cytoplasmic segment spans residues 789-801; the sequence is KLFNGVFVKSART. A helical transmembrane segment spans residues 802–822; the sequence is SIYTSIYLCLLAIELLFLLGI. Residues 823 to 828 lie on the Extracellular side of the membrane; it reads EQTETS. The chain crosses the membrane as a helical span at residues 829-849; it reads IFCGFITIFLHCAILSGTAWF. The Cytoplasmic portion of the chain corresponds to 850 to 875; sequence CYEAFHSYSTLTSDELLLEVDQTPKV. The helical transmembrane segment at 876–896 threads the bilayer; sequence NCYYLLSYGLSLSVVAISLVI. The Extracellular portion of the chain corresponds to 897–920; sequence DPSTYTQNDYCVLMEANALFYATF. The helical transmembrane segment at 921–941 threads the bilayer; the sequence is VMPVLVFFVAAIGYTFLSWII. The Cytoplasmic portion of the chain corresponds to 942-968; it reads MCRKSRTGLKTKEHTRLASVRFDIRCS. A helical transmembrane segment spans residues 969 to 989; it reads FVFLLLLSAVWCSAYFYLRGA. The Extracellular segment spans residues 990–999; sequence KMDDDTADVY. A helical membrane pass occupies residues 1000-1020; the sequence is GYCFICFNTLLGLYIFVFHCI. The Cytoplasmic portion of the chain corresponds to 1021–1710; it reads QNEKIRREYR…VRCYLEPLAK (690 aa). Phosphoserine is present on residues Ser1156, Ser1253, Ser1260, Ser1329, and Ser1330. Positions 1234 to 1259 are disordered; that stretch reads KPNSGQHGKKKRGAGGVPASPSGSLH. 2 disordered regions span residues 1452–1540 and 1568–1690; these read GGGS…SDER and DYGA…QQRH. Over residues 1458 to 1483 the composition is skewed to low complexity; that stretch reads GGSVSSRSQQQQLKKQQQQQSLAQQR. 2 stretches are compositionally biased toward acidic residues: residues 1491-1505 and 1515-1528; these read DDDD…EEAT and CDED…DLED. Over residues 1638–1650 the composition is skewed to polar residues; the sequence is QTPAQKRQQLQKL. Residues 1651–1672 are compositionally biased toward low complexity; the sequence is SPQSTTSSSSHTSHSNPNPHPH. Positions 1673–1689 are enriched in basic residues; it reads QLTHPHPHQHPPHHQQR.

Belongs to the G-protein coupled receptor 2 family. LN-TM7 subfamily. Forms a heterodimer, consisting of a large extracellular region non-covalently linked to a seven-transmembrane moiety. Post-translationally, proteolytically cleaved into 2 subunits, an extracellular subunit and a seven-transmembrane subunit.

Its subcellular location is the cell membrane. The sequence is that of Latrophilin Cirl from Drosophila erecta (Fruit fly).